A 430-amino-acid chain; its full sequence is Spermatogenic leucine zipper protein 1 (430 aa).

A disordered region spans residues 1 to 25; the sequence is MASSAKSAEMPTISKTVNPTPDPHQ. Positions 62-102 form a coiled coil; it reads EQQTAQKFNNLLKEIKDILKNMAGFEEKITEAKELFEETNI. A Phosphoserine modification is found at Ser107. Positions 166 to 177 are helix-loop-helix motif; the sequence is KINEMLSTNLPV. Residues 178 to 244 are basic motif; sequence SLAPEKEDNE…NVQEETMKIR (67 aa). Coiled-coil stretches lie at residues 214–269 and 316–351; these read LEEK…KLIK and SLQLMAALLENECQILQQRVEILKELHHQKQGTLQE. Phosphoserine is present on Ser258. Residues 303 to 324 form a leucine-zipper region; it reads LEEQVKKLSHDTYSLQLMAALL.

In terms of assembly, interacts with PPP1CC isoform gamma-2. Post-translationally, phosphorylated by MAPK1/ERK2 and MAPK3/ERK1. As to expression, specifically and strongly expressed in the testis. Expressed in several tumor cell lines.

The protein localises to the cytoplasm. Its subcellular location is the nucleus. In terms of biological role, transcription factor that binds to the DNA sequence 5'-CANNTG-3'(E box) and the G-box motif. May play an important role in the regulation of cell proliferation and differentiation during spermatogenesis. The sequence is that of Spermatogenic leucine zipper protein 1 (SPZ1) from Homo sapiens (Human).